The chain runs to 605 residues: Elongation factor 4 (605 aa).

Positions 4–186 constitute a tr-type G domain; it reads SATRNFCIIA…AIVARVPAPK (183 aa). Residues 16–21 and 133–136 each bind GTP; these read DHGKST and NKID.

This sequence belongs to the TRAFAC class translation factor GTPase superfamily. Classic translation factor GTPase family. LepA subfamily.

It is found in the cell membrane. The catalysed reaction is GTP + H2O = GDP + phosphate + H(+). In terms of biological role, required for accurate and efficient protein synthesis under certain stress conditions. May act as a fidelity factor of the translation reaction, by catalyzing a one-codon backward translocation of tRNAs on improperly translocated ribosomes. Back-translocation proceeds from a post-translocation (POST) complex to a pre-translocation (PRE) complex, thus giving elongation factor G a second chance to translocate the tRNAs correctly. Binds to ribosomes in a GTP-dependent manner. This is Elongation factor 4 from Dehalococcoides mccartyi (strain ATCC BAA-2266 / KCTC 15142 / 195) (Dehalococcoides ethenogenes (strain 195)).